Consider the following 365-residue polypeptide: Cyclin-O protein B (365 aa).

The interval 22-64 (SGKRKRDSVYSPGDATPGDRGEGEPKCPSVGTKKRAKYSRHRK) is disordered. Basic residues predominate over residues 53–64 (TKKRAKYSRHRK).

The protein belongs to the cyclin family.

It is found in the cytoplasm. Specifically required for generation of multiciliated cells, possibly by promoting a cell cycle state compatible with centriole amplification and maturation. Acts downstream of mcidas to promote mother centriole amplification and maturation in preparation for apical docking. This chain is Cyclin-O protein B (ccno-b), found in Xenopus laevis (African clawed frog).